A 246-amino-acid polypeptide reads, in one-letter code: Transcription factor A, mitochondrial (246 aa).

Residues 1–42 constitute a mitochondrion transit peptide; it reads MAFLRSMWGVLSALGRSGAELCTGCGSRLRSPFSFVYLPRWF. Residues 50–118 constitute a DNA-binding region (HMG box 1); that stretch reads PKKPVSSYLR…VYKEEISRFK (69 aa). 3 positions are modified to phosphoserine; by PKA: serine 55, serine 56, and serine 61. Threonine 122 carries the phosphothreonine modification. The segment at residues 155 to 219 is a DNA-binding region (HMG box 2); that stretch reads PKRPRSAYNV…RYHNEMKSWE (65 aa). Serine 160 is subject to Phosphoserine; by PKA. 2 positions are modified to phosphoserine: serine 193 and serine 195.

Monomer; binds DNA as a monomer. Homodimer. Component of the mitochondrial transcription initiation complex, composed at least of TFB2M, TFAM and POLRMT. In this complex TFAM recruits POLRMT to the promoter whereas TFB2M induces structural changes in POLRMT to enable promoter opening and trapping of the DNA non-template strand. Upon metabolic stress, forms a complex composed of FOXO3, SIRT3, TFAM and POLRMT. Interacts with TFB1M and TFB2M. Interacts with CLPX; this enhances DNA-binding. In terms of processing, phosphorylation by PKA within the HMG box 1 impairs DNA binding and promotes degradation by the AAA+ Lon protease.

The protein localises to the mitochondrion. Its subcellular location is the mitochondrion matrix. It localises to the mitochondrion nucleoid. Its function is as follows. Binds to the mitochondrial light strand promoter and functions in mitochondrial transcription regulation. Component of the mitochondrial transcription initiation complex, composed at least of TFB2M, TFAM and POLRMT that is required for basal transcription of mitochondrial DNA. In this complex, TFAM recruits POLRMT to a specific promoter whereas TFB2M induces structural changes in POLRMT to enable promoter opening and trapping of the DNA non-template strand. Required for accurate and efficient promoter recognition by the mitochondrial RNA polymerase. Promotes transcription initiation from the HSP1 and the light strand promoter by binding immediately upstream of transcriptional start sites. Is able to unwind DNA. Bends the mitochondrial light strand promoter DNA into a U-turn shape via its HMG boxes. Required for maintenance of normal levels of mitochondrial DNA. May play a role in organizing and compacting mitochondrial DNA. The protein is Transcription factor A, mitochondrial of Homo sapiens (Human).